The primary structure comprises 87 residues: UPF0250 protein ETA_23570 (87 aa).

This sequence belongs to the UPF0250 family.

This chain is UPF0250 protein ETA_23570, found in Erwinia tasmaniensis (strain DSM 17950 / CFBP 7177 / CIP 109463 / NCPPB 4357 / Et1/99).